The following is a 530-amino-acid chain: Transcription factor SPT20 homolog (530 aa).

Position 296 is a phosphoserine (serine 296). The interval 419 to 530 (CPVKMSHSSS…PASSSQRHES (112 aa)) is disordered. 2 stretches are compositionally biased toward low complexity: residues 424-436 (SHSS…LNSG) and 466-475 (SSSGNSSSGN). Threonine 490 is modified (phosphothreonine). A compositionally biased stretch (low complexity) spans 514-530 (LSPAALSPASSSQRHES). 2 positions are modified to phosphoserine: serine 515 and serine 520.

The protein belongs to the SPT20 family. As to quaternary structure, interacts with ATG9A. Interacts with MAPK14.

Required for MAP kinase p38 (MAPK11, MAPK12, MAPK13 and/or MAPK14) activation during gastrulation. Required for down-regulation of E-cadherin during gastrulation by regulating E-cadherin protein level downstream from NCK-interacting kinase (NIK) and independently of the regulation of transcription by FGF signaling and Snail. Required for starvation-induced ATG9A trafficking during autophagy. The protein is Transcription factor SPT20 homolog (Supt20h) of Rattus norvegicus (Rat).